The chain runs to 245 residues: 4-hydroxy-tetrahydrodipicolinate reductase (245 aa).

Residues 7–12 (GAKGKV), 75–77 (GTT), and 102–105 (APNF) each bind NAD(+). His-132 functions as the Proton donor/acceptor in the catalytic mechanism. His-133 is a (S)-2,3,4,5-tetrahydrodipicolinate binding site. The active-site Proton donor is the Lys-136. A (S)-2,3,4,5-tetrahydrodipicolinate-binding site is contributed by 142–143 (GT).

It belongs to the DapB family.

The protein localises to the cytoplasm. The enzyme catalyses (S)-2,3,4,5-tetrahydrodipicolinate + NAD(+) + H2O = (2S,4S)-4-hydroxy-2,3,4,5-tetrahydrodipicolinate + NADH + H(+). The catalysed reaction is (S)-2,3,4,5-tetrahydrodipicolinate + NADP(+) + H2O = (2S,4S)-4-hydroxy-2,3,4,5-tetrahydrodipicolinate + NADPH + H(+). The protein operates within amino-acid biosynthesis; L-lysine biosynthesis via DAP pathway; (S)-tetrahydrodipicolinate from L-aspartate: step 4/4. Functionally, catalyzes the conversion of 4-hydroxy-tetrahydrodipicolinate (HTPA) to tetrahydrodipicolinate. This Mycolicibacterium gilvum (strain PYR-GCK) (Mycobacterium gilvum (strain PYR-GCK)) protein is 4-hydroxy-tetrahydrodipicolinate reductase.